Consider the following 396-residue polypeptide: S-adenosylmethionine synthase (396 aa).

Histidine 16 provides a ligand contact to ATP. Aspartate 18 is a Mg(2+) binding site. Glutamate 44 serves as a coordination point for K(+). The L-methionine site is built by glutamate 57 and glutamine 100. Positions 100–110 (QSVDIAQGVDR) are flexible loop. ATP is bound by residues 165–167 (DAK), aspartate 240, 246–247 (RK), alanine 263, and lysine 267. Residue aspartate 240 participates in L-methionine binding. Residue lysine 271 coordinates L-methionine.

This sequence belongs to the AdoMet synthase family. As to quaternary structure, homotetramer; dimer of dimers. It depends on Mg(2+) as a cofactor. The cofactor is K(+).

It localises to the cytoplasm. The catalysed reaction is L-methionine + ATP + H2O = S-adenosyl-L-methionine + phosphate + diphosphate. Its pathway is amino-acid biosynthesis; S-adenosyl-L-methionine biosynthesis; S-adenosyl-L-methionine from L-methionine: step 1/1. In terms of biological role, catalyzes the formation of S-adenosylmethionine (AdoMet) from methionine and ATP. The overall synthetic reaction is composed of two sequential steps, AdoMet formation and the subsequent tripolyphosphate hydrolysis which occurs prior to release of AdoMet from the enzyme. The chain is S-adenosylmethionine synthase from Pseudomonas syringae pv. syringae (strain B728a).